Reading from the N-terminus, the 672-residue chain is Rho GTPase-activating protein 40 (672 aa).

Positions 43 to 68 (GCSPGLSTGPTNLQQHPQKPRPADCS) are disordered. Over residues 47 to 59 (GLSTGPTNLQQHP) the composition is skewed to polar residues. The Rho-GAP domain occupies 321 to 519 (VPLHSLLEAD…MMVQYQDLLW (199 aa)).

Functionally, GTPase activator for the Rho-type GTPases by converting them to an inactive GDP-bound state. This Mus musculus (Mouse) protein is Rho GTPase-activating protein 40.